The sequence spans 89 residues: Elongation factor 1-beta (89 aa).

It belongs to the EF-1-beta/EF-1-delta family.

Functionally, promotes the exchange of GDP for GTP in EF-1-alpha/GDP, thus allowing the regeneration of EF-1-alpha/GTP that could then be used to form the ternary complex EF-1-alpha/GTP/AAtRNA. The sequence is that of Elongation factor 1-beta from Methanococcoides burtonii (strain DSM 6242 / NBRC 107633 / OCM 468 / ACE-M).